The following is a 320-amino-acid chain: MENRNTFSWVKEQITRSISVSIMIYVITRTSISNAYPIFAQQGYENPREATGRIVCANCHLASKPVDIEVPQAVLPDTVFEAVLRIPYDMQLKQVLANGKKGGLNVGAVLILPEGFELAPPDRISPELKEKIGNLAFQSYRPDKKNILVIGPVPGKKYSEIVFPILSPDPATKKDAHFLKYPIYVGGNRGRGQIYPDGSKSNNTVYNATSTGIVRKILRKEKGGYEISIVDASDGRQVIDIIPPGPELLVSEGESIKIDQPLTSNPNVGGFGQGDAEIVLQDPLRVQGLLFFFASVILAQVFLVLKKKQFEKVQLYEMNF.

An N-terminal signal peptide occupies residues Met1–Ala35. Heme contacts are provided by Tyr36, Cys56, Cys59, and His60. The helical transmembrane segment at Val286 to Lys306 threads the bilayer.

It belongs to the cytochrome f family. The 4 large subunits of the cytochrome b6-f complex are cytochrome b6, subunit IV (17 kDa polypeptide, petD), cytochrome f and the Rieske protein, while the 4 small subunits are PetG, PetL, PetM and PetN. The complex functions as a dimer. Requires heme as cofactor.

Its subcellular location is the plastid. The protein localises to the chloroplast thylakoid membrane. Functionally, component of the cytochrome b6-f complex, which mediates electron transfer between photosystem II (PSII) and photosystem I (PSI), cyclic electron flow around PSI, and state transitions. In Hordeum vulgare (Barley), this protein is Cytochrome f.